Reading from the N-terminus, the 123-residue chain is Histone H2B (123 aa).

A disordered region spans residues 1–32 (MAPKAPGKGAKKAAKSKAPRAPGDRKRKRTRR). Residues 9 to 18 (GAKKAAKSKA) show a composition bias toward basic residues. Ser110 carries an O-linked (GlcNAc) serine glycan. Lys118 participates in a covalent cross-link: Glycyl lysine isopeptide (Lys-Gly) (interchain with G-Cter in ubiquitin).

The protein belongs to the histone H2B family. The nucleosome is a histone octamer containing two molecules each of H2A, H2B, H3 and H4 assembled in one H3-H4 heterotetramer and two H2A-H2B heterodimers. The octamer wraps approximately 147 bp of DNA. In terms of processing, monoubiquitination of Lys-118 gives a specific tag for epigenetic transcriptional activation and is also prerequisite for histone H3 'Lys-4' and 'Lys-79' methylation. GlcNAcylation at Ser-110 promotes monoubiquitination of Lys-118. It fluctuates in response to extracellular glucose, and associates with transcribed genes.

It is found in the nucleus. It localises to the chromosome. Core component of nucleosome. Nucleosomes wrap and compact DNA into chromatin, limiting DNA accessibility to the cellular machineries which require DNA as a template. Histones thereby play a central role in transcription regulation, DNA repair, DNA replication and chromosomal stability. DNA accessibility is regulated via a complex set of post-translational modifications of histones, also called histone code, and nucleosome remodeling. The protein is Histone H2B of Holothuria tubulosa (Tubular sea cucumber).